Here is a 475-residue protein sequence, read N- to C-terminus: ATP synthase subunit beta, chloroplastic (475 aa).

156–163 (GGAGVGKT) contributes to the ATP binding site.

The protein belongs to the ATPase alpha/beta chains family. F-type ATPases have 2 components, CF(1) - the catalytic core - and CF(0) - the membrane proton channel. CF(1) has five subunits: alpha(3), beta(3), gamma(1), delta(1), epsilon(1). CF(0) has four main subunits: a(1), b(1), b'(1) and c(9-12).

It is found in the plastid. The protein resides in the chloroplast thylakoid membrane. The catalysed reaction is ATP + H2O + 4 H(+)(in) = ADP + phosphate + 5 H(+)(out). Produces ATP from ADP in the presence of a proton gradient across the membrane. The catalytic sites are hosted primarily by the beta subunits. The polypeptide is ATP synthase subunit beta, chloroplastic (Gracilaria tenuistipitata var. liui (Red alga)).